We begin with the raw amino-acid sequence, 283 residues long: 5'-nucleotidase SurE (283 aa).

A divalent metal cation-binding residues include aspartate 14, aspartate 15, serine 47, and asparagine 105.

Belongs to the SurE nucleotidase family. A divalent metal cation serves as cofactor.

The protein resides in the cytoplasm. It carries out the reaction a ribonucleoside 5'-phosphate + H2O = a ribonucleoside + phosphate. Its function is as follows. Nucleotidase that shows phosphatase activity on nucleoside 5'-monophosphates. The protein is 5'-nucleotidase SurE of Chlamydia trachomatis serovar L2 (strain ATCC VR-902B / DSM 19102 / 434/Bu).